Here is a 66-residue protein sequence, read N- to C-terminus: Disintegrin EO5B (66 aa).

Residues 1–65 (NSAHPCCDPV…DCPRNPYKGK (65 aa)) enclose the Disintegrin domain. 4 disulfides stabilise this stretch: Cys-6-Cys-29, Cys-20-Cys-26, Cys-25-Cys-50, and Cys-38-Cys-57. The short motif at 42–44 (VGD) is the Cell attachment site; atypical (VGD) element.

Belongs to the disintegrin family. Dimeric disintegrin subfamily. Heterodimer with EO4A or EO5A; disulfide-linked. In terms of tissue distribution, expressed by the venom gland.

It is found in the secreted. Functionally, poor inhibitor of platelet aggregation. When it dimerizes with EO4A, it inhibits the adhesion of cells expressing the RGD-dependent integrin alpha-5/beta-1 (ITGA5/ITGB1) to immobilized fibronectin. When it dimerizes with EO5A, it inhibits the adhesion of the alpha-4/beta-1 (ITGA4/ITGB1) integrin to VCAM-1. When it dimerizes either with EO4A or EO5A, the inhibition on alpha-IIb/beta-3 (ITGA2B/ITGB3) is low. The protein is Disintegrin EO5B of Echis ocellatus (Ocellated saw-scaled viper).